The following is a 75-amino-acid chain: MDLVALKFIAIGLAVFGMLGAGLGIANIFSAMLNGIARNPESEGKMKSYVYIGAAMVEIMGLLAFVLAMLLIFAA.

Transmembrane regions (helical) follow at residues 8–28 and 52–72; these read FIAI…IANI and IGAA…MLLI.

The protein belongs to the ATPase C chain family. F-type ATPases have 2 components, F(1) - the catalytic core - and F(0) - the membrane proton channel. F(1) has five subunits: alpha(3), beta(3), gamma(1), delta(1), epsilon(1). F(0) has three main subunits: a(1), b(2) and c(10-14). The alpha and beta chains form an alternating ring which encloses part of the gamma chain. F(1) is attached to F(0) by a central stalk formed by the gamma and epsilon chains, while a peripheral stalk is formed by the delta and b chains.

It is found in the cell membrane. F(1)F(0) ATP synthase produces ATP from ADP in the presence of a proton or sodium gradient. F-type ATPases consist of two structural domains, F(1) containing the extramembraneous catalytic core and F(0) containing the membrane proton channel, linked together by a central stalk and a peripheral stalk. During catalysis, ATP synthesis in the catalytic domain of F(1) is coupled via a rotary mechanism of the central stalk subunits to proton translocation. Functionally, key component of the F(0) channel; it plays a direct role in translocation across the membrane. A homomeric c-ring of between 10-14 subunits forms the central stalk rotor element with the F(1) delta and epsilon subunits. This is ATP synthase subunit c from Wolbachia pipientis wMel.